The primary structure comprises 171 residues: T-cell surface glycoprotein CD3 delta chain (171 aa).

A signal peptide spans 1–21; sequence MEHSRFLSGLILAAFLSRVSP. Residues 22-104 are Extracellular-facing; sequence YEVEMEELED…NCVELDSATL (83 aa). Residues C37 and C72 are joined by a disulfide bond. N38 carries N-linked (GlcNAc...) asparagine glycosylation. The chain crosses the membrane as a helical span at residues 105 to 125; the sequence is AGIIVTDIIATLLLALGVYCF. Residues 126–171 are Cytoplasmic-facing; it reads AGHEMGRFSRAADTQDLLRNDQLYQPLRDRNDGQYSRLGENWARNK. Residues 138 to 166 enclose the ITAM domain; sequence DTQDLLRNDQLYQPLRDRNDGQYSRLGEN. Phosphotyrosine occurs at positions 149 and 160.

In terms of assembly, the TCR-CD3 complex is composed of a CD3D/CD3E and a CD3G/CD3E heterodimers that preferentially associate with TCRalpha and TCRbeta, respectively, to form TCRalpha/CD3E/CD3G and TCRbeta/CD3G/CD3E trimers. In turn, the hexamer interacts with CD3Z homodimer to form the TCR-CD3 complex. Alternatively, TCRalpha and TCRbeta can be replaced by TCRgamma and TCRdelta. Interacts with coreceptors CD4 and CD8. Post-translationally, phosphorylated on Tyr residues after T-cell receptor triggering by LCK in association with CD4/CD8. In terms of tissue distribution, CD3D is mostly present on T-lymphocytes with its TCR-CD3 partners. Present also in fetal NK-cells.

The protein localises to the cell membrane. Functionally, part of the TCR-CD3 complex present on T-lymphocyte cell surface that plays an essential role in adaptive immune response. When antigen presenting cells (APCs) activate T-cell receptor (TCR), TCR-mediated signals are transmitted across the cell membrane by the CD3 chains CD3D, CD3E, CD3G and CD3Z. All CD3 chains contain immunoreceptor tyrosine-based activation motifs (ITAMs) in their cytoplasmic domain. Upon TCR engagement, these motifs become phosphorylated by Src family protein tyrosine kinases LCK and FYN, resulting in the activation of downstream signaling pathways. In addition of this role of signal transduction in T-cell activation, CD3D plays an essential role in thymocyte differentiation. Indeed, participates in correct intracellular TCR-CD3 complex assembly and surface expression. In absence of a functional TCR-CD3 complex, thymocytes are unable to differentiate properly. Interacts with CD4 and CD8 and thus serves to establish a functional link between the TCR and coreceptors CD4 and CD8, which is needed for activation and positive selection of CD4 or CD8 T-cells. The polypeptide is T-cell surface glycoprotein CD3 delta chain (CD3D) (Sus scrofa (Pig)).